The chain runs to 647 residues: Centrosomal protein of 72 kDa (647 aa).

LRR repeat units lie at residues Glu29–Leu50, Gly55–Thr76, and Ala77–His98. An LRRCT domain is found at Asn111–His150. 2 stretches are compositionally biased toward basic and acidic residues: residues Ala152–Glu161 and Lys220–His234. Disordered stretches follow at residues Ala152–Arg176, Pro211–Arg256, and Pro285–Gly413. Ser237 carries the phosphoserine modification. Basic and acidic residues predominate over residues Ser366 to Asn377. Ser382 is subject to Phosphoserine. Positions Glu390–Glu402 are enriched in basic and acidic residues. Ser404 carries the post-translational modification Phosphoserine. A coiled-coil region spans residues Ser476–Met620.

This sequence belongs to the CEP72 family. As to quaternary structure, interacts with KIZ, PCM1 and CDK5RAP2.

It localises to the cytoplasm. Its subcellular location is the cytoskeleton. It is found in the microtubule organizing center. The protein resides in the centrosome. The protein localises to the centriolar satellite. In terms of biological role, involved in the recruitment of key centrosomal proteins to the centrosome. Provides centrosomal microtubule-nucleation activity on the gamma-tubulin ring complexes (gamma-TuRCs) and has critical roles in forming a focused bipolar spindle, which is needed for proper tension generation between sister chromatids. Required for localization of KIZ, AKAP9 and gamma-tubulin ring complexes (gamma-TuRCs). Involved in centriole duplication. Required for CDK5RAP22, CEP152, WDR62 and CEP63 centrosomal localization and promotes the centrosomal localization of CDK2. The chain is Centrosomal protein of 72 kDa (CEP72) from Homo sapiens (Human).